We begin with the raw amino-acid sequence, 146 residues long: Snaclec coagulation factor IX/factor X-binding protein subunit B (146 aa).

Residues methionine 1 to alanine 23 form the signal peptide. Cystine bridges form between cysteine 25/cysteine 36, cysteine 53/cysteine 142, and cysteine 119/cysteine 134. The 112-residue stretch at tyrosine 32–glutamate 143 folds into the C-type lectin domain. Residues serine 64 and glutamate 70 each coordinate Ca(2+). Position 143 (glutamate 143) interacts with Ca(2+).

The protein belongs to the snaclec family. Heterodimer with subunit A of IX/X-bp or IX-bp; disulfide-linked. As to expression, expressed by the venom gland.

The protein localises to the secreted. In terms of biological role, when linked to subunit A of IX/X-bp, anticoagulant protein which binds to the gamma-carboxyglutamic acid-domain regions of factors IX (F9) and factor X (F10) in the presence of calcium with a 1 to 1 stoichiometry. When linked to subunit A of IX-bp, anticoagulant protein which binds to the gamma-carboxyglutamic acid-domain regions of factor IX (but not to factor X) in the presence of calcium with a 1 to 1 stoichiometry. The chain is Snaclec coagulation factor IX/factor X-binding protein subunit B from Gloydius halys (Chinese water mocassin).